Consider the following 388-residue polypeptide: Methylthioribose-1-phosphate isomerase (388 aa).

Catalysis depends on D253, which acts as the Proton donor.

Belongs to the eIF-2B alpha/beta/delta subunits family. MtnA subfamily.

Its subcellular location is the cytoplasm. The protein localises to the nucleus. The enzyme catalyses 5-(methylsulfanyl)-alpha-D-ribose 1-phosphate = 5-(methylsulfanyl)-D-ribulose 1-phosphate. Its pathway is amino-acid biosynthesis; L-methionine biosynthesis via salvage pathway; L-methionine from S-methyl-5-thio-alpha-D-ribose 1-phosphate: step 1/6. Its function is as follows. Catalyzes the interconversion of methylthioribose-1-phosphate (MTR-1-P) into methylthioribulose-1-phosphate (MTRu-1-P). This Fusarium vanettenii (strain ATCC MYA-4622 / CBS 123669 / FGSC 9596 / NRRL 45880 / 77-13-4) (Fusarium solani subsp. pisi) protein is Methylthioribose-1-phosphate isomerase.